Reading from the N-terminus, the 100-residue chain is Phosphoribosyl-ATP pyrophosphatase (100 aa).

The protein belongs to the PRA-PH family.

It is found in the cytoplasm. The catalysed reaction is 1-(5-phospho-beta-D-ribosyl)-ATP + H2O = 1-(5-phospho-beta-D-ribosyl)-5'-AMP + diphosphate + H(+). The protein operates within amino-acid biosynthesis; L-histidine biosynthesis; L-histidine from 5-phospho-alpha-D-ribose 1-diphosphate: step 2/9. In Haloquadratum walsbyi (strain DSM 16790 / HBSQ001), this protein is Phosphoribosyl-ATP pyrophosphatase.